The primary structure comprises 377 residues: Hsc70-interacting protein 2 (377 aa).

The tract at residues 68 to 123 (AKANEPANAPEDSEDEKSLSDPESDVELDMEGVIEADSDPAQPMGNYSKKATEEEV) is disordered. A Phosphoserine modification is found at Ser80. Residues 89–105 (PESDVELDMEGVIEADS) show a composition bias toward acidic residues. 3 TPR repeats span residues 126 to 159 (ASEL…SPGN), 161 to 193 (LFHA…NSDL), and 195 to 227 (AGYK…DFDE). The stretch at 239–276 (NAKKIEQHRLKQERRQAERKIKERQRDQRRARKEQEKH) forms a coiled coil. Over residues 243 to 277 (IEQHRLKQERRQAERKIKERQRDQRRARKEQEKHN) the composition is skewed to basic and acidic residues. 2 disordered regions span residues 243–302 (IEQH…DILG) and 344–377 (DVGA…DGLD). Positions 282-293 (GSSGEFSGGNPG) are enriched in gly residues. One can recognise an STI1 domain in the interval 294-336 (NGNMSDILGAMSDPEVSAAIQDILSNPGNITKYASNPKIYNLI). Residues 355–369 (KAGKPSEPKPKKDSA) show a composition bias toward basic and acidic residues.

Belongs to the FAM10 family. In terms of assembly, homotetramer. Interacts with Hsc70 as well as DNAJ homologs and Hsp90.

The protein resides in the cytoplasm. One HIP oligomer binds the ATPase domains of at least two Hsc70 molecules dependent on activation of the Hsc70 ATPase by Hsp40. Stabilizes the ADP state of Hsc70 that has a high affinity for substrate protein. Through its own chaperone activity, it may contribute to the interaction of Hsc70 with various target proteins. In Drosophila melanogaster (Fruit fly), this protein is Hsc70-interacting protein 2.